We begin with the raw amino-acid sequence, 1166 residues long: Myosin-1 (1166 aa).

Over residues 1–13 the composition is skewed to polar residues; sequence MSQKVTPFMQSLK. Positions 1 to 71 are disordered; it reads MSQKVTPFMQ…AGDSEDSPYS (71 aa). Ser-14 carries the post-translational modification Phosphoserine. The span at 32 to 45 shows a compositional bias: polar residues; that stretch reads NSSGASVRLTNSNV. Positions 112-161 constitute a Myosin N-terminal SH3-like domain; it reads KKILQSWIQLPNGNWELGKILSTSGEESVISLPEGKVIKVISETLVPANP. The 673-residue stretch at 165–837 folds into the Myosin motor domain; sequence DGVDDLMQLS…QIGVLEDTRN (673 aa). ATP contacts are provided by residues 256-263 and 304-312; these read GESGAGKT and NDNSSRFGK. Actin-binding regions lie at residues 589–623 and 717–739; these read LFEK…KQHL and LFQL…KPNN. IQ domains are found at residues 839–868, 862–891, 888–917, and 911–940; these read TLHG…GISI, LKRG…RHKA, RHKA…ASVV, and IADA…LKSG. The stretch at 955-1005 forms a coiled coil; that stretch reads SVLSELQRRVLKAEAALREKEEENDILQQRLQQYENRWSEYETKMKSMEEI. Residues 1030-1065 form a disordered region; sequence ARNSDASVNASDATDWDSSSNQFRSQTSNGVGSRLQ. The segment covering 1032–1060 has biased composition (polar residues); that stretch reads NSDASVNASDATDWDSSSNQFRSQTSNGV.

Belongs to the TRAFAC class myosin-kinesin ATPase superfamily. Myosin family. Plant myosin class VIII subfamily. In terms of assembly, homodimer.

It is found in the cell junction. Its subcellular location is the plasmodesma. It localises to the cytoplasm. The protein resides in the cytoskeleton. The protein localises to the phragmoplast. It is found in the endosome. Its subcellular location is the endoplasmic reticulum. Its function is as follows. Myosin heavy chain that is required for the cell cycle-regulated transport of various organelles and proteins for their segregation. Functions by binding with its tail domain to receptor proteins on organelles and exerting force with its N-terminal motor domain against actin filaments, thereby transporting its cargo along polarized actin cables. Involved in endocytosis via its action in endosomal trafficking. The polypeptide is Myosin-1 (VIII-1) (Arabidopsis thaliana (Mouse-ear cress)).